Reading from the N-terminus, the 248-residue chain is UDP-2,3-diacylglucosamine hydrolase (248 aa).

5 residues coordinate Mn(2+): Asp-8, His-10, Asp-41, Asn-79, and His-114. Position 79–80 (79–80 (NR)) interacts with substrate. Residues Asp-122, Ser-160, Asp-171, and His-202 each contribute to the substrate site. His-202 and His-204 together coordinate Mn(2+).

This sequence belongs to the LpxH family. Requires Mn(2+) as cofactor.

Its subcellular location is the cell inner membrane. The catalysed reaction is UDP-2-N,3-O-bis[(3R)-3-hydroxytetradecanoyl]-alpha-D-glucosamine + H2O = 2-N,3-O-bis[(3R)-3-hydroxytetradecanoyl]-alpha-D-glucosaminyl 1-phosphate + UMP + 2 H(+). It participates in glycolipid biosynthesis; lipid IV(A) biosynthesis; lipid IV(A) from (3R)-3-hydroxytetradecanoyl-[acyl-carrier-protein] and UDP-N-acetyl-alpha-D-glucosamine: step 4/6. Functionally, hydrolyzes the pyrophosphate bond of UDP-2,3-diacylglucosamine to yield 2,3-diacylglucosamine 1-phosphate (lipid X) and UMP by catalyzing the attack of water at the alpha-P atom. Involved in the biosynthesis of lipid A, a phosphorylated glycolipid that anchors the lipopolysaccharide to the outer membrane of the cell. The chain is UDP-2,3-diacylglucosamine hydrolase from Stenotrophomonas maltophilia (strain R551-3).